A 270-amino-acid chain; its full sequence is 4-hydroxy-tetrahydrodipicolinate reductase (270 aa).

NAD(+) contacts are provided by residues 11–16 and Glu37; that span reads GAGGRM. NADP(+) is bound at residue Arg38. NAD(+) is bound by residues 101–103 and 125–128; these read GTT and APNM. His158 serves as the catalytic Proton donor/acceptor. His159 is a (S)-2,3,4,5-tetrahydrodipicolinate binding site. Lys162 functions as the Proton donor in the catalytic mechanism. Residue 168–169 coordinates (S)-2,3,4,5-tetrahydrodipicolinate; it reads GT.

Belongs to the DapB family.

The protein resides in the cytoplasm. It carries out the reaction (S)-2,3,4,5-tetrahydrodipicolinate + NAD(+) + H2O = (2S,4S)-4-hydroxy-2,3,4,5-tetrahydrodipicolinate + NADH + H(+). The catalysed reaction is (S)-2,3,4,5-tetrahydrodipicolinate + NADP(+) + H2O = (2S,4S)-4-hydroxy-2,3,4,5-tetrahydrodipicolinate + NADPH + H(+). It participates in amino-acid biosynthesis; L-lysine biosynthesis via DAP pathway; (S)-tetrahydrodipicolinate from L-aspartate: step 4/4. Its function is as follows. Catalyzes the conversion of 4-hydroxy-tetrahydrodipicolinate (HTPA) to tetrahydrodipicolinate. The protein is 4-hydroxy-tetrahydrodipicolinate reductase of Shewanella baltica (strain OS223).